The sequence spans 496 residues: GTPase Der (496 aa).

EngA-type G domains are found at residues 3-166 and 208-381; these read PVVA…FDNL and IKLA…RSAT. GTP contacts are provided by residues 9–16, 56–60, 118–121, 214–221, 261–265, and 326–329; these read GRPNVGKS, DTGGI, NKVD, DTAGV, and NKWD. The 85-residue stretch at 382 to 466 folds into the KH-like domain; sequence TRVGTSVLTR…PIRIQFQNSD (85 aa).

Belongs to the TRAFAC class TrmE-Era-EngA-EngB-Septin-like GTPase superfamily. EngA (Der) GTPase family. In terms of assembly, associates with the 50S ribosomal subunit.

Its function is as follows. GTPase that plays an essential role in the late steps of ribosome biogenesis. This is GTPase Der from Vibrio vulnificus (strain YJ016).